A 539-amino-acid polypeptide reads, in one-letter code: Chaperonin GroEL 1 (539 aa).

Residues 30 to 33 (TLGP), Lys51, 87 to 91 (DGTTT), Gly415, 480 to 482 (NAA), and Asp496 each bind ATP.

Belongs to the chaperonin (HSP60) family. As to quaternary structure, forms a cylinder of 14 subunits composed of two heptameric rings stacked back-to-back. Interacts with the co-chaperonin GroES.

Its subcellular location is the cytoplasm. It catalyses the reaction ATP + H2O + a folded polypeptide = ADP + phosphate + an unfolded polypeptide.. In terms of biological role, together with its co-chaperonin GroES, plays an essential role in assisting protein folding. The GroEL-GroES system forms a nano-cage that allows encapsulation of the non-native substrate proteins and provides a physical environment optimized to promote and accelerate protein folding. The chain is Chaperonin GroEL 1 from Bradyrhizobium sp. (strain ORS 278).